A 154-amino-acid polypeptide reads, in one-letter code: UPF0178 protein SPO3827 (154 aa).

Belongs to the UPF0178 family.

This is UPF0178 protein SPO3827 from Ruegeria pomeroyi (strain ATCC 700808 / DSM 15171 / DSS-3) (Silicibacter pomeroyi).